Reading from the N-terminus, the 153-residue chain is Ribonuclease H (153 aa).

Residues 1–141 (MKKIQLFTDG…CDDLARRAAE (141 aa)) enclose the RNase H type-1 domain. 4 residues coordinate Mg(2+): Asp9, Glu47, Asp69, and Asp133.

Belongs to the RNase H family. Monomer. Requires Mg(2+) as cofactor.

It localises to the cytoplasm. It carries out the reaction Endonucleolytic cleavage to 5'-phosphomonoester.. Endonuclease that specifically degrades the RNA of RNA-DNA hybrids. This Psychromonas ingrahamii (strain DSM 17664 / CCUG 51855 / 37) protein is Ribonuclease H.